The sequence spans 158 residues: Snaclec alboaggregin-D subunit alpha (158 aa).

Positions 1 to 23 are cleaved as a signal peptide; that stretch reads MGRFIFGSFGLLVVFLSLSGTGA. 3 disulfide bridges follow: cysteine 27/cysteine 38, cysteine 55/cysteine 152, and cysteine 127/cysteine 144. A C-type lectin domain is found at 34 to 153; it reads YDRYCYQAFS…CAELNPFICK (120 aa).

Belongs to the snaclec family. In terms of assembly, tetramer of heterodimers of alpha and beta subunits (alphabeta)(4); disulfide-linked. In terms of tissue distribution, expressed by the venom gland.

The protein localises to the secreted. Snaclec that induces human platelet aggregation in the absence of any cofactor with the EC(50) of 0.25 nM and causes tyrosine phosphorylation in human platelets. Antibodies against either platelet GPIbalpha (GP1BA) or GPVI (GP6) inhibit alboaggregin D-induced platelet aggregation. Only the combination of these two antibodies completely inhibit aggregation, suggesting that it acts through both GPIbalpha (GP1BA) and GPVI (GP6). The chain is Snaclec alboaggregin-D subunit alpha from Trimeresurus albolabris (White-lipped pit viper).